The primary structure comprises 100 residues: NADH-quinone oxidoreductase subunit K (100 aa).

The next 3 helical transmembrane spans lie at 4–24 (LFHG…SLIV), 28–48 (ILFM…ALVV), and 60–80 (IMYI…LALL).

The protein belongs to the complex I subunit 4L family. NDH-1 is composed of 13 different subunits. Subunits NuoA, H, J, K, L, M, N constitute the membrane sector of the complex.

The protein resides in the cell membrane. The enzyme catalyses a quinone + NADH + 5 H(+)(in) = a quinol + NAD(+) + 4 H(+)(out). Functionally, NDH-1 shuttles electrons from NADH, via FMN and iron-sulfur (Fe-S) centers, to quinones in the respiratory chain. The immediate electron acceptor for the enzyme in this species is believed to be ubiquinone. Couples the redox reaction to proton translocation (for every two electrons transferred, four hydrogen ions are translocated across the cytoplasmic membrane), and thus conserves the redox energy in a proton gradient. The sequence is that of NADH-quinone oxidoreductase subunit K from Buchnera aphidicola subsp. Schizaphis graminum (strain Sg).